A 409-amino-acid polypeptide reads, in one-letter code: Pyrophosphate--fructose 6-phosphate 1-phosphotransferase (409 aa).

Position 14 (Gly-14) interacts with diphosphate. Residue Asp-123 participates in Mg(2+) binding. Substrate is bound by residues Thr-151–Asp-153, Met-196–Arg-198, Glu-268, and Tyr-325–Arg-328. Asp-153 acts as the Proton acceptor in catalysis.

This sequence belongs to the phosphofructokinase type A (PFKA) family. PPi-dependent PFK group II subfamily. Clade 'P' sub-subfamily. As to quaternary structure, homodimer. The cofactor is Mg(2+).

It localises to the cytoplasm. The catalysed reaction is beta-D-fructose 6-phosphate + diphosphate = beta-D-fructose 1,6-bisphosphate + phosphate + H(+). It functions in the pathway carbohydrate degradation; glycolysis; D-glyceraldehyde 3-phosphate and glycerone phosphate from D-glucose: step 3/4. Its activity is regulated as follows. Non-allosteric. In terms of biological role, catalyzes the phosphorylation of D-fructose 6-phosphate, the first committing step of glycolysis. Uses inorganic phosphate (PPi) as phosphoryl donor instead of ATP like common ATP-dependent phosphofructokinases (ATP-PFKs), which renders the reaction reversible, and can thus function both in glycolysis and gluconeogenesis. Consistently, PPi-PFK can replace the enzymes of both the forward (ATP-PFK) and reverse (fructose-bisphosphatase (FBPase)) reactions. In Methylomonas methanica, this protein is Pyrophosphate--fructose 6-phosphate 1-phosphotransferase.